The chain runs to 320 residues: Glutathione synthetase (320 aa).

One can recognise an ATP-grasp domain in the interval 130–315 (KIFTSWFPDL…ITGMLLDYIE (186 aa)). ATP is bound at residue 156 to 212 (WEKYQDIIIKPLDAMGGANIFRIKKNDPNFSVIVENMTNYERKYCMVQNYLPEIKLG). 2 residues coordinate Mg(2+): Glu286 and Asn288.

It belongs to the prokaryotic GSH synthase family. Mg(2+) is required as a cofactor. Requires Mn(2+) as cofactor.

The catalysed reaction is gamma-L-glutamyl-L-cysteine + glycine + ATP = glutathione + ADP + phosphate + H(+). It functions in the pathway sulfur metabolism; glutathione biosynthesis; glutathione from L-cysteine and L-glutamate: step 2/2. In Buchnera aphidicola subsp. Acyrthosiphon pisum (strain APS) (Acyrthosiphon pisum symbiotic bacterium), this protein is Glutathione synthetase.